The primary structure comprises 741 residues: Phosphoribosylformylglycinamidine synthase subunit PurL (741 aa).

His53 is a catalytic residue. The ATP site is built by Tyr56 and Lys95. Position 97 (Glu97) interacts with Mg(2+). Substrate-binding positions include 98–101 (SHNH) and Arg120. His99 functions as the Proton acceptor in the catalytic mechanism. Position 121 (Asp121) interacts with Mg(2+). Gln244 is a binding site for substrate. A Mg(2+)-binding site is contributed by Asp274. 318–320 (ESQ) is a binding site for substrate. Residues Asp501 and Gly538 each coordinate ATP. Residue Asn539 participates in Mg(2+) binding. A substrate-binding site is contributed by Ser541.

Belongs to the FGAMS family. In terms of assembly, monomer. Part of the FGAM synthase complex composed of 1 PurL, 1 PurQ and 2 PurS subunits.

It is found in the cytoplasm. The enzyme catalyses N(2)-formyl-N(1)-(5-phospho-beta-D-ribosyl)glycinamide + L-glutamine + ATP + H2O = 2-formamido-N(1)-(5-O-phospho-beta-D-ribosyl)acetamidine + L-glutamate + ADP + phosphate + H(+). It participates in purine metabolism; IMP biosynthesis via de novo pathway; 5-amino-1-(5-phospho-D-ribosyl)imidazole from N(2)-formyl-N(1)-(5-phospho-D-ribosyl)glycinamide: step 1/2. In terms of biological role, part of the phosphoribosylformylglycinamidine synthase complex involved in the purines biosynthetic pathway. Catalyzes the ATP-dependent conversion of formylglycinamide ribonucleotide (FGAR) and glutamine to yield formylglycinamidine ribonucleotide (FGAM) and glutamate. The FGAM synthase complex is composed of three subunits. PurQ produces an ammonia molecule by converting glutamine to glutamate. PurL transfers the ammonia molecule to FGAR to form FGAM in an ATP-dependent manner. PurS interacts with PurQ and PurL and is thought to assist in the transfer of the ammonia molecule from PurQ to PurL. The polypeptide is Phosphoribosylformylglycinamidine synthase subunit PurL (Ligilactobacillus salivarius (strain UCC118) (Lactobacillus salivarius)).